The following is a 307-amino-acid chain: Serine/threonine-protein phosphatase PP2A-3 catalytic subunit (307 aa).

Residues Asp-55, His-57, Asp-83, and Asn-115 each coordinate Mn(2+). The Proton donor role is filled by His-116. Mn(2+) is bound by residues His-165 and His-239.

The protein belongs to the PPP phosphatase family. PP-2A subfamily. The cofactor is Mn(2+).

The protein localises to the cytoplasm. The catalysed reaction is O-phospho-L-seryl-[protein] + H2O = L-seryl-[protein] + phosphate. It catalyses the reaction O-phospho-L-threonyl-[protein] + H2O = L-threonyl-[protein] + phosphate. In Oryza sativa subsp. indica (Rice), this protein is Serine/threonine-protein phosphatase PP2A-3 catalytic subunit (PP2A3).